The chain runs to 602 residues: Bifunctional lycopene cyclase/phytoene synthase (602 aa).

Residues Met1–Arg238 form a lycopene beta-cyclase region. The next 7 membrane-spanning stretches (helical) occupy residues Val7 to Phe27, Tyr35 to Tyr55, Val69 to Val89, Pro110 to Ala130, Pro142 to Gly162, Ala173 to Ile193, and Leu211 to Phe231. Residues Ile245–Ile602 are phytoene synthase.

This sequence in the N-terminal section; belongs to the lycopene beta-cyclase family. The protein in the C-terminal section; belongs to the phytoene/squalene synthase family.

It localises to the membrane. The catalysed reaction is all-trans-lycopene = gamma-carotene. It catalyses the reaction gamma-carotene = all-trans-beta-carotene. The enzyme catalyses 2 (2E,6E,10E)-geranylgeranyl diphosphate = 15-cis-phytoene + 2 diphosphate. The protein operates within carotenoid biosynthesis; beta-carotene biosynthesis. It participates in carotenoid biosynthesis; phytoene biosynthesis; all-trans-phytoene from geranylgeranyl diphosphate: step 1/1. Functionally, bifunctional enzyme that catalyzes the reactions from geranylgeranyl diphosphate to phytoene (phytoene synthase) and lycopene to beta-carotene via the intermediate gamma-carotene (lycopene cyclase). The chain is Bifunctional lycopene cyclase/phytoene synthase from Phycomyces blakesleeanus (strain ATCC 8743b / DSM 1359 / FGSC 10004 / NBRC 33097 / NRRL 1555).